A 246-amino-acid polypeptide reads, in one-letter code: Small ribosomal subunit protein uS3 (246 aa).

The KH type-2 domain occupies Ile38–Arg106. Residues Val218–Arg246 are disordered.

It belongs to the universal ribosomal protein uS3 family. Part of the 30S ribosomal subunit. Forms a tight complex with proteins S10 and S14.

Binds the lower part of the 30S subunit head. Binds mRNA in the 70S ribosome, positioning it for translation. The chain is Small ribosomal subunit protein uS3 from Porphyromonas gingivalis (strain ATCC 33277 / DSM 20709 / CIP 103683 / JCM 12257 / NCTC 11834 / 2561).